Reading from the N-terminus, the 334-residue chain is MFNKKNILITGGTGSFGKTYTKVLLENYKPNKIIIYSRDELKQFEMASVFNAPCMRYFIGDVRDKERLSAAMRDVDFVIHAAAMKHVPIAEYNPMECIKTNIHGAQNVIDACFENGVKKCIALSTDKACNPVNLYGATKLASDKLFVAANNIAGNKQTRFGVTRYGNVVGSRGSVVPFFKKLISEGAKELPITDTRMTRFWISLEDGVKFVLSNFERMHGGEIFIPKIPSMKITDLAHALAPNLSHKIIGIRAGEKLHEIMISSDDSHLTYEFENYYAISPSIKFVDKDNDFSINALGEKGQKVKDGFSYSSDNNPLWASEKELLEIINHTEGF.

NADP(+) contacts are provided by residues 13–16 (TGSF), 37–42 (SRDELK), 61–62 (DV), A81, K85, and 123–124 (LS). K85 is a substrate binding site. Residue K127 is part of the active site. 2 residues coordinate NADP(+): Y135 and K139. N167 serves as a coordination point for substrate. NADP(+) is bound at residue 168–172 (VVGSR). 4 residues coordinate substrate: V175, T193, R252, and E255.

The protein belongs to the polysaccharide synthase family. In terms of assembly, homohexamer. It depends on NADP(+) as a cofactor.

The catalysed reaction is UDP-N-acetyl-alpha-D-glucosamine = UDP-2-acetamido-2,6-dideoxy-beta-L-arabino-hex-4-ulose + H2O. Catalyzes the first step in the biosynthesis of pseudaminic acid, a sialic-acid-like sugar that is used to modify flagellin. Has both C6 dehydratase and C5 epimerase activities that result in the production of both UDP-2-acetamido-2,6-dideoxy-beta-L-arabino-4-hexulose and UDP-2-acetamido-2,6-dideoxy-alpha-D-xylo-4-hexulose. This is UDP-N-acetylglucosamine 4,6-dehydratase (inverting) (pseB) from Campylobacter jejuni subsp. jejuni serotype O:2 (strain ATCC 700819 / NCTC 11168).